The chain runs to 632 residues: MEGVRFVVWRLGFLVFVWFFDISSATLSPTGVNYEVTALVAVKNELNDPYKVLENWDVNSVDPCSWRMVSCTDGYVSSLDLPSQSLSGTLSPRIGNLTYLQSVVLQNNAITGPIPETIGRLEKLQSLDLSNNSFTGEIPASLGELKNLNYLRLNNNSLIGTCPESLSKIEGLTLVDISYNNLSGSLPKVSARTFKVIGNALICGPKAVSNCSAVPEPLTLPQDGPDESGTRTNGHHVALAFAASFSAAFFVFFTSGMFLWWRYRRNKQIFFDVNEQYDPEVSLGHLKRYTFKELRSATNHFNSKNILGRGGYGIVYKGHLNDGTLVAVKRLKDCNIAGGEVQFQTEVETISLALHRNLLRLRGFCSSNQERILVYPYMPNGSVASRLKDNIRGEPALDWSRRKKIAVGTARGLVYLHEQCDPKIIHRDVKAANILLDEDFEAVVGDFGLAKLLDHRDSHVTTAVRGTVGHIAPEYLSTGQSSEKTDVFGFGILLLELITGQKALDFGRSAHQKGVMLDWVKKLHQEGKLKQLIDKDLNDKFDRVELEEIVQVALLCTQFNPSHRPKMSEVMKMLEGDGLAERWEATQNGTGEHQPPPLPPGMVSSSPRVRYYSDYIQESSLVVEAIELSGPR.

Residues 1 to 25 (MEGVRFVVWRLGFLVFVWFFDISSA) form the signal peptide. The Extracellular portion of the chain corresponds to 26–238 (TLSPTGVNYE…GTRTNGHHVA (213 aa)). An N-linked (GlcNAc...) asparagine glycan is attached at asparagine 96. LRR repeat units follow at residues 97-121 (LTYL…IGRL), 122-145 (EKLQ…LGEL), 147-168 (NLNY…SLSK), and 169-193 (IEGL…SART). Residues asparagine 131, asparagine 155, asparagine 181, and asparagine 210 are each glycosylated (N-linked (GlcNAc...) asparagine). A helical membrane pass occupies residues 239 to 259 (LAFAASFSAAFFVFFTSGMFL). Residues 260–632 (WWRYRRNKQI…VEAIELSGPR (373 aa)) lie on the Cytoplasmic side of the membrane. The residue at position 298 (threonine 298) is a Phosphothreonine. A Protein kinase domain is found at 301–584 (FNSKNILGRG…EGDGLAERWE (284 aa)). ATP is bound at residue 307-315 (LGRGGYGIV). Residue threonine 324 is modified to Phosphothreonine. Lysine 329 lines the ATP pocket. 2 positions are modified to phosphoserine: serine 382 and serine 385. Positions 415–495 (YLHEQCDPKI…DVFGFGILLL (81 aa)) are interaction with geminivirus NSP protein. Aspartate 428 serves as the catalytic Proton acceptor. A phosphothreonine mark is found at threonine 461, threonine 462, and threonine 467. Tyrosine 475 carries the phosphotyrosine modification. The residue at position 477 (serine 477) is a Phosphoserine. Threonine 478 is subject to Phosphothreonine. Position 482 is a phosphoserine (serine 482). Threonine 557 is modified (phosphothreonine).

It belongs to the protein kinase superfamily. Ser/Thr protein kinase family. Oligomer. Interacts with geminivirus nuclear shuttle protein (NSP). Post-translationally, autophosphorylated. Expressed in seedlings, leaves and flowers.

The protein localises to the cell membrane. It catalyses the reaction L-seryl-[protein] + ATP = O-phospho-L-seryl-[protein] + ADP + H(+). It carries out the reaction L-threonyl-[protein] + ATP = O-phospho-L-threonyl-[protein] + ADP + H(+). With respect to regulation, inhibited by the viral nuclear shuttle protein (NSP) that binds to the region required for oligomerization. Functionally, involved in defense response to geminivirus infection. The chain is Protein NSP-INTERACTING KINASE 3 (NIK3) from Arabidopsis thaliana (Mouse-ear cress).